The chain runs to 302 residues: Lipoyl synthase (302 aa).

Positions 54, 59, 65, 80, 84, 87, and 291 each coordinate [4Fe-4S] cluster. In terms of domain architecture, Radical SAM core spans 66-280; the sequence is WSRKTATYML…RIYGKSIGFK (215 aa).

This sequence belongs to the radical SAM superfamily. Lipoyl synthase family. Requires [4Fe-4S] cluster as cofactor.

It is found in the cytoplasm. It catalyses the reaction [[Fe-S] cluster scaffold protein carrying a second [4Fe-4S](2+) cluster] + N(6)-octanoyl-L-lysyl-[protein] + 2 oxidized [2Fe-2S]-[ferredoxin] + 2 S-adenosyl-L-methionine + 4 H(+) = [[Fe-S] cluster scaffold protein] + N(6)-[(R)-dihydrolipoyl]-L-lysyl-[protein] + 4 Fe(3+) + 2 hydrogen sulfide + 2 5'-deoxyadenosine + 2 L-methionine + 2 reduced [2Fe-2S]-[ferredoxin]. It participates in protein modification; protein lipoylation via endogenous pathway; protein N(6)-(lipoyl)lysine from octanoyl-[acyl-carrier-protein]: step 2/2. Its function is as follows. Catalyzes the radical-mediated insertion of two sulfur atoms into the C-6 and C-8 positions of the octanoyl moiety bound to the lipoyl domains of lipoate-dependent enzymes, thereby converting the octanoylated domains into lipoylated derivatives. The sequence is that of Lipoyl synthase from Leptospira borgpetersenii serovar Hardjo-bovis (strain JB197).